A 359-amino-acid chain; its full sequence is Chorismate synthase (359 aa).

2 residues coordinate NADP(+): arginine 48 and arginine 54. FMN contacts are provided by residues 129–131 (RSS), 241–242 (NA), glycine 285, 300–304 (KPTSS), and arginine 326.

Belongs to the chorismate synthase family. Homotetramer. Requires FMNH2 as cofactor.

It catalyses the reaction 5-O-(1-carboxyvinyl)-3-phosphoshikimate = chorismate + phosphate. Its pathway is metabolic intermediate biosynthesis; chorismate biosynthesis; chorismate from D-erythrose 4-phosphate and phosphoenolpyruvate: step 7/7. Functionally, catalyzes the anti-1,4-elimination of the C-3 phosphate and the C-6 proR hydrogen from 5-enolpyruvylshikimate-3-phosphate (EPSP) to yield chorismate, which is the branch point compound that serves as the starting substrate for the three terminal pathways of aromatic amino acid biosynthesis. This reaction introduces a second double bond into the aromatic ring system. This Afipia carboxidovorans (strain ATCC 49405 / DSM 1227 / KCTC 32145 / OM5) (Oligotropha carboxidovorans) protein is Chorismate synthase.